The following is a 486-amino-acid chain: Katanin p60 ATPase-containing subunit A1 (486 aa).

A disordered region spans residues 103-174 (RSSPLPVRRP…NKAEVSEKEV (72 aa)). Positions 143–174 (NGDRAKPLKGKEKKEAKPKDDKNKAEVSEKEV) are enriched in basic and acidic residues. 244–251 (GPPGTGKT) serves as a coordination point for ATP.

Belongs to the AAA ATPase family. Katanin p60 subunit A1 subfamily. Can homooligomerize into hexameric rings, which may be promoted by interaction with microtubules. Interacts with katnb1, which may serve as a targeting subunit.

It is found in the cytoplasm. The protein localises to the cytoskeleton. The protein resides in the microtubule organizing center. It localises to the centrosome. Its subcellular location is the spindle pole. It is found in the spindle. The enzyme catalyses n ATP + n H2O + a microtubule = n ADP + n phosphate + (n+1) alpha/beta tubulin heterodimers.. ATPase activity is stimulated by microtubules, which promote homooligomerization. ATP-dependent microtubule severing is stimulated by interaction with katnb1. Its function is as follows. Catalytic subunit of a complex which severs microtubules in an ATP-dependent manner. Microtubule severing may promote rapid reorganization of cellular microtubule arrays and the release of microtubules from the centrosome following nucleation. The protein is Katanin p60 ATPase-containing subunit A1 (katna1) of Salmo salar (Atlantic salmon).